The following is a 545-amino-acid chain: DNA mismatch repair protein MutL (545 aa).

A disordered region spans residues G516–P545.

The protein belongs to the DNA mismatch repair MutL/HexB family.

This protein is involved in the repair of mismatches in DNA. It is required for dam-dependent methyl-directed DNA mismatch repair. May act as a 'molecular matchmaker', a protein that promotes the formation of a stable complex between two or more DNA-binding proteins in an ATP-dependent manner without itself being part of a final effector complex. This Thermus thermophilus (strain ATCC BAA-163 / DSM 7039 / HB27) protein is DNA mismatch repair protein MutL.